Consider the following 591-residue polypeptide: MIVLPNKVRIFINDRMKKDIYLGISNFGFENDIDEILGIAHLLEHLLISFDSTIFLANASTSRSYMSFWCKSINSATESDAIRTLVSWFFSNGKLKDNFSLSSIRFHIKELENEYYFRNEVFHCMDILTFLSGGDLYNGGRIDMIDNLNIVRDMLVNRMQRISGSNIVIFVKRLGPGTLDFFNQTFGSLPACPEIIPSSIPVSTNGKIVMTPSPFYTVMVKINPTLDNILGILYLYETYHLIDYETIGNQLYLTVSFIDETEYESFLRGEAILQISQCQRINMNYSDDYMMNIYLNFPWLSHDLYDYITRINDDSKSILISLTNEIYTSIINRDIIVIYPNFSKAMCNTRDTQQHPIVVLDATNDGLIKKPYRSIPLMKRLTSNEIFIRYGDASLMDMITLSLSKQDISLKRNAEGIRVKHSFSADDIQAIMESDSFLKYSRSKPAAMYQYIFLSFFASGNSIDDILTNRDSTLEFSKKTKSKILFGRNARYDVTTKSSFVCGIVRGKLLDKTSLVEMMWDLKKKGLIYSMEFTNLLSKNTFYLFTFTIYTDEVYDYLNTNKLFPAKCLVISTKGDVENFSSLKKDVVIRV.

A Zn(2+)-binding site is contributed by His-41. Glu-44 is a catalytic residue. His-45 and Glu-112 together coordinate Zn(2+).

It belongs to the peptidase M44 family. Zn(2+) serves as cofactor. Post-translationally, undergoes proteolytic processing during the course of infection. May be cleaved into 46 kDa and 22 kDa products (Potential).

It is found in the virion. In terms of biological role, probably involved in maturation of some viral proteins by processing them preferentially at Ala-Gly-|-Ser/Thr/Lys motifs. Does not seem to be responsible for the cleavage of major core proteins. The chain is Metalloendopeptidase OPG085 (OPG085) from Homo sapiens (Human).